The primary structure comprises 239 residues: MATPHINAEMGAFADVVLMPGDPLRAKYIAETFLEDVVQVCDVRNMFGYTGTYKGRKISVMGHGMGIPSCSIYATELIKDFGVKKIIRVGSCGAVNEDIKVRDVVIGMGACTDSKVNRIRFKGHDFAAIADYKMVRAAEDAAKARGIDVKVGNLFSAELFYTPDPEMFDVMDKYGIVGVEMEAAGIYGVAAEYGAKALTICTVSDHIKTGEQTTSDERQTTFNDMMLIALDSVLLGDAE.

H5 is an a purine D-ribonucleoside binding site. Phosphate-binding positions include G21, R25, R44, and 88–91 (RVGS). Residues 180 to 182 (EME) and 204 to 205 (SD) each bind a purine D-ribonucleoside. D205 (proton donor) is an active-site residue.

Belongs to the PNP/UDP phosphorylase family. In terms of assembly, homohexamer; trimer of homodimers.

It carries out the reaction a purine D-ribonucleoside + phosphate = a purine nucleobase + alpha-D-ribose 1-phosphate. The catalysed reaction is a purine 2'-deoxy-D-ribonucleoside + phosphate = a purine nucleobase + 2-deoxy-alpha-D-ribose 1-phosphate. Catalyzes the reversible phosphorolytic breakdown of the N-glycosidic bond in the beta-(deoxy)ribonucleoside molecules, with the formation of the corresponding free purine bases and pentose-1-phosphate. This Vibrio parahaemolyticus serotype O3:K6 (strain RIMD 2210633) protein is Purine nucleoside phosphorylase DeoD-type 1.